A 358-amino-acid chain; its full sequence is tRNA (guanine-N(7)-)-methyltransferase (358 aa).

The interval 1–29 (MTPPPPKRQKRDEYRKATAEATSQSGASD) is disordered. Residues Gly-99 and 122–123 (EI) each bind S-adenosyl-L-methionine. Residues 151 to 186 (TATAASETPSQQQAQIDGKQANANAAADAASPAPST) show a composition bias toward low complexity. Residues 151–194 (TATAASETPSQQQAQIDGKQANANAAADAASPAPSTDTEHMPTT) form a disordered region. S-adenosyl-L-methionine is bound by residues 209–210 (NT) and Cys-229. Residue Asp-232 is part of the active site. 330–332 (TEE) serves as a coordination point for S-adenosyl-L-methionine.

The protein belongs to the class I-like SAM-binding methyltransferase superfamily. TrmB family. In terms of assembly, forms a complex with trm82.

It localises to the nucleus. The catalysed reaction is guanosine(46) in tRNA + S-adenosyl-L-methionine = N(7)-methylguanosine(46) in tRNA + S-adenosyl-L-homocysteine. Its pathway is tRNA modification; N(7)-methylguanine-tRNA biosynthesis. Its function is as follows. Catalyzes the formation of N(7)-methylguanine at position 46 (m7G46) in tRNA. This Aspergillus fumigatus (strain ATCC MYA-4609 / CBS 101355 / FGSC A1100 / Af293) (Neosartorya fumigata) protein is tRNA (guanine-N(7)-)-methyltransferase (trm8).